The following is a 215-amino-acid chain: NAD(P)H-hydrate epimerase (215 aa).

In terms of domain architecture, YjeF N-terminal spans 10-212 (SRELDDKTIN…DIGIYRGNAF (203 aa)). 59-63 (NNGGD) is a binding site for (6S)-NADPHX. Residues asparagine 60 and aspartate 122 each coordinate K(+). (6S)-NADPHX-binding positions include 126-132 (GSGLSRN) and aspartate 155. Residue serine 158 coordinates K(+).

This sequence belongs to the NnrE/AIBP family. K(+) serves as cofactor.

It catalyses the reaction (6R)-NADHX = (6S)-NADHX. The enzyme catalyses (6R)-NADPHX = (6S)-NADPHX. In terms of biological role, catalyzes the epimerization of the S- and R-forms of NAD(P)HX, a damaged form of NAD(P)H that is a result of enzymatic or heat-dependent hydration. This is a prerequisite for the S-specific NAD(P)H-hydrate dehydratase to allow the repair of both epimers of NAD(P)HX. This is NAD(P)H-hydrate epimerase from Lentilactobacillus buchneri (strain NRRL B-30929) (Lactobacillus buchneri).